The chain runs to 44 residues: uncharacterized protein (44 aa).

Residues 6-26 (SILIRGGGGVLIVLILLLWIV) form a helical membrane-spanning segment.

The protein localises to the membrane. This is an uncharacterized protein from Ornithodoros (relapsing fever ticks).